A 192-amino-acid polypeptide reads, in one-letter code: dTTP/UTP pyrophosphatase (192 aa).

Asp70 functions as the Proton acceptor in the catalytic mechanism.

The protein belongs to the Maf family. YhdE subfamily. It depends on a divalent metal cation as a cofactor.

The protein localises to the cytoplasm. It catalyses the reaction dTTP + H2O = dTMP + diphosphate + H(+). It carries out the reaction UTP + H2O = UMP + diphosphate + H(+). In terms of biological role, nucleoside triphosphate pyrophosphatase that hydrolyzes dTTP and UTP. May have a dual role in cell division arrest and in preventing the incorporation of modified nucleotides into cellular nucleic acids. This chain is dTTP/UTP pyrophosphatase, found in Clostridium perfringens (strain SM101 / Type A).